Reading from the N-terminus, the 162-residue chain is Nascent polypeptide-associated complex subunit beta (162 aa).

Disordered regions lie at residues 1–39 (MPVDPAKLAALQKKSGAQSGGKGTPRRPGKKVAGRNISE) and 130–162 (EQAKKTAGGPDAAKEAGDDEIPNLVENFEDNVE). Residues 24 to 33 (TPRRPGKKVA) are compositionally biased toward basic residues. The 66-residue stretch at 38–103 (SEDEKKLSAT…SQQKDIAELI (66 aa)) folds into the NAC-A/B domain. Residues 146-162 (GDDEIPNLVENFEDNVE) show a composition bias toward acidic residues.

Belongs to the NAC-beta family. In terms of assembly, part of the nascent polypeptide-associated complex (NAC), consisting of EGD2 and EGD1. NAC associates with ribosomes via EGD1.

It localises to the cytoplasm. The protein resides in the nucleus. In terms of biological role, component of the nascent polypeptide-associated complex (NAC), a dynamic component of the ribosomal exit tunnel, protecting the emerging polypeptides from interaction with other cytoplasmic proteins to ensure appropriate nascent protein targeting. The NAC complex also promotes mitochondrial protein import by enhancing productive ribosome interactions with the outer mitochondrial membrane and blocks the inappropriate interaction of ribosomes translating non-secretory nascent polypeptides with translocation sites in the membrane of the endoplasmic reticulum. EGD1 may act as a transcription factor that exert a negative effect on the expression of several genes that are transcribed by RNA polymerase II. This chain is Nascent polypeptide-associated complex subunit beta (EGD1), found in Yarrowia lipolytica (strain CLIB 122 / E 150) (Yeast).